The primary structure comprises 339 residues: UDP-glucose 4-epimerase (339 aa).

Residues 10 to 12, 31 to 35, 58 to 59, Phe80, and Lys84 each bind NAD(+); these read GYI, DNLSN, and DL. A substrate-binding site is contributed by 124–126; sequence SAT. Tyr148 functions as the Proton acceptor in the catalytic mechanism. 2 residues coordinate NAD(+): Lys152 and Tyr176. Substrate-binding positions include 176-178, 197-199, Arg230, and 291-294; these read YFN, NNL, and RPGD.

Belongs to the NAD(P)-dependent epimerase/dehydratase family. NAD(+) is required as a cofactor.

The enzyme catalyses UDP-alpha-D-glucose = UDP-alpha-D-galactose. The catalysed reaction is UDP-N-acetyl-alpha-D-glucosamine = UDP-N-acetyl-alpha-D-galactosamine. Its pathway is cell wall biogenesis; teichoic acid biosynthesis. Functionally, catalyzes two distinct but analogous reactions: the reversible epimerization of UDP-glucose to UDP-galactose and the reversible epimerization of UDP-N-acetylglucosamine to UDP-N-acetylgalactosamine. The enzyme is more efficient in catalyzing the interconversion between unacetylated than between corresponding N-acetylated substrates. Essential for growth in media containing either glucose or galactose. May protect the cell from the toxic effects of galactose and glucose or derivatives of both sugars. Involved in the biosynthesis of teichoic acids via the formation of UDP-N-acetylgalactosamine. Influences cell division. In Bacillus subtilis (strain 168), this protein is UDP-glucose 4-epimerase.